Reading from the N-terminus, the 251-residue chain is 3-deoxy-manno-octulosonate cytidylyltransferase (251 aa).

This sequence belongs to the KdsB family.

The protein resides in the cytoplasm. It catalyses the reaction 3-deoxy-alpha-D-manno-oct-2-ulosonate + CTP = CMP-3-deoxy-beta-D-manno-octulosonate + diphosphate. The protein operates within nucleotide-sugar biosynthesis; CMP-3-deoxy-D-manno-octulosonate biosynthesis; CMP-3-deoxy-D-manno-octulosonate from 3-deoxy-D-manno-octulosonate and CTP: step 1/1. Its pathway is bacterial outer membrane biogenesis; lipopolysaccharide biosynthesis. Functionally, activates KDO (a required 8-carbon sugar) for incorporation into bacterial lipopolysaccharide in Gram-negative bacteria. This is 3-deoxy-manno-octulosonate cytidylyltransferase from Parabacteroides distasonis (strain ATCC 8503 / DSM 20701 / CIP 104284 / JCM 5825 / NCTC 11152).